Here is a 114-residue protein sequence, read N- to C-terminus: Large ribosomal subunit protein bL19 (114 aa).

The protein belongs to the bacterial ribosomal protein bL19 family.

Its function is as follows. This protein is located at the 30S-50S ribosomal subunit interface and may play a role in the structure and function of the aminoacyl-tRNA binding site. This Clavibacter sepedonicus (Clavibacter michiganensis subsp. sepedonicus) protein is Large ribosomal subunit protein bL19.